Here is a 635-residue protein sequence, read N- to C-terminus: Probable serine/threonine-protein kinase DDB_G0270146 (635 aa).

The Protein kinase domain occupies 77-329 (VISDIAIGKG…AKELLSHPWI (253 aa)). Residues 83–91 (IGKGAFATV) and lysine 106 contribute to the ATP site. The active-site Proton acceptor is the aspartate 199. The span at 360–392 (SLLSNSSGGDDSVTDSDLSISNQSSRSSSFLLD) shows a compositional bias: low complexity. The disordered stretch occupies residues 360 to 405 (SLLSNSSGGDDSVTDSDLSISNQSSRSSSFLLDDGGGGGGSKNHTV). Coiled coils occupy residues 417–456 (IEFN…KYRE) and 536–585 (KKAL…KDSS). Basic and acidic residues predominate over residues 540 to 582 (EAQKRREKEQEKLKEQEKLKEKKKEKDIKKEKDKKDKKDKQLK). The tract at residues 540 to 635 (EAQKRREKEQ…GRSSSKIFNE (96 aa)) is disordered. The segment covering 583–598 (DSSSSTTTTNSTPSTP) has biased composition (low complexity). Over residues 626-635 (GRSSSKIFNE) the composition is skewed to polar residues.

It belongs to the protein kinase superfamily. STE Ser/Thr protein kinase family. It depends on Mg(2+) as a cofactor.

The catalysed reaction is L-seryl-[protein] + ATP = O-phospho-L-seryl-[protein] + ADP + H(+). It catalyses the reaction L-threonyl-[protein] + ATP = O-phospho-L-threonyl-[protein] + ADP + H(+). The chain is Probable serine/threonine-protein kinase DDB_G0270146 from Dictyostelium discoideum (Social amoeba).